Consider the following 395-residue polypeptide: uncharacterized protein (395 aa).

The segment at 247–270 (GGTVVPPNPDQPNPTPPDSSSPNY) is disordered. The segment covering 252 to 265 (PPNPDQPNPTPPDS) has biased composition (pro residues).

This is an uncharacterized protein from Vibrio cholerae serotype O1 (strain ATCC 39315 / El Tor Inaba N16961).